Consider the following 322-residue polypeptide: Probable ethanolamine-phosphate cytidylyltransferase (322 aa).

This sequence belongs to the cytidylyltransferase family.

The enzyme catalyses phosphoethanolamine + CTP + H(+) = CDP-ethanolamine + diphosphate. Its pathway is phospholipid metabolism; phosphatidylethanolamine biosynthesis; phosphatidylethanolamine from ethanolamine: step 2/3. The protein is Probable ethanolamine-phosphate cytidylyltransferase (MUQ1) of Encephalitozoon cuniculi (strain GB-M1) (Microsporidian parasite).